Here is a 122-residue protein sequence, read N- to C-terminus: Large ribosomal subunit protein uL14 (122 aa).

Belongs to the universal ribosomal protein uL14 family. As to quaternary structure, part of the 50S ribosomal subunit. Forms a cluster with proteins L3 and L19. In the 70S ribosome, L14 and L19 interact and together make contacts with the 16S rRNA in bridges B5 and B8.

Binds to 23S rRNA. Forms part of two intersubunit bridges in the 70S ribosome. This is Large ribosomal subunit protein uL14 from Nostoc punctiforme (strain ATCC 29133 / PCC 73102).